The following is a 453-amino-acid chain: Gamma-aminobutyric acid receptor subunit alpha-6 (453 aa).

The N-terminal stretch at Met-1 to Ala-19 is a signal peptide. The Extracellular portion of the chain corresponds to Gln-20–Phe-243. Residue Asn-31 is glycosylated (N-linked (GlcNAc...) asparagine). Residue Arg-84 coordinates 4-aminobutanoate. N-linked (GlcNAc...) asparagine glycosylation is found at Asn-128 and Asn-141. Residue Thr-147 coordinates 4-aminobutanoate. Cys-156 and Cys-170 form a disulfide bridge. Residues Met-244–Ile-264 traverse the membrane as a helical segment. Over Asn-265–Pro-270 the chain is Cytoplasmic. A helical transmembrane segment spans residues Ala-271–Ala-290. Topologically, residues Arg-291–Asp-304 are extracellular. Residues Trp-305–Asn-325 form a helical membrane-spanning segment. Residues Tyr-326 to Arg-422 are Cytoplasmic-facing. Ser-375 carries the phosphoserine modification. Residue Thr-403 is modified to Phosphothreonine. Residues Ile-423–Lys-443 form a helical membrane-spanning segment. At Asp-444 to Glu-453 the chain is on the extracellular side.

The protein belongs to the ligand-gated ion channel (TC 1.A.9) family. Gamma-aminobutyric acid receptor (TC 1.A.9.5) subfamily. GABRA6 sub-subfamily. Heteropentamer, formed by a combination of alpha (GABRA1-6), beta (GABRB1-3), gamma (GABRG1-3), delta (GABRD), epsilon (GABRE), rho (GABRR1-3), pi (GABRP) and theta (GABRQ) chains, each subunit exhibiting distinct physiological and pharmacological properties. Binds UBQLN1. Expressed in brain, in cerebellar granule cells.

It localises to the postsynaptic cell membrane. It is found in the cell membrane. It carries out the reaction chloride(in) = chloride(out). Alpha subunit of the heteropentameric ligand-gated chloride channel gated by gamma-aminobutyric acid (GABA), a major inhibitory neurotransmitter in the brain. GABA-gated chloride channels, also named GABA(A) receptors (GABAAR), consist of five subunits arranged around a central pore and contain GABA active binding site(s) located at the alpha and beta subunit interface(s). When activated by GABA, GABAARs selectively allow the flow of chloride anions across the cell membrane down their electrochemical gradient. Alpha-6/GABRA6 subunits are found at both synaptic and extrasynaptic sites. Chloride influx into the postsynaptic neuron following GABAAR opening decreases the neuron ability to generate a new action potential, thereby reducing nerve transmission. Extrasynaptic alpha-6-containing receptors contribute to the tonic GABAergic inhibition. Alpha-6 subunits are also present on glutamatergic synapses. The chain is Gamma-aminobutyric acid receptor subunit alpha-6 from Rattus norvegicus (Rat).